The chain runs to 55 residues: Chromatin protein Cren7 (55 aa).

It belongs to the Cren7 family. Monomer. Post-translationally, methylated at multiple sites, to varying extents.

It localises to the chromosome. Its subcellular location is the cytoplasm. In terms of biological role, a chromatin protein, binds double-stranded DNA without sequence specificity. Constrains negative DNA supercoils. This is Chromatin protein Cren7 from Ignicoccus hospitalis (strain KIN4/I / DSM 18386 / JCM 14125).